Reading from the N-terminus, the 448-residue chain is Probable glycine dehydrogenase (decarboxylating) subunit 1 (448 aa).

The protein belongs to the GcvP family. N-terminal subunit subfamily. As to quaternary structure, the glycine cleavage system is composed of four proteins: P, T, L and H. In this organism, the P 'protein' is a heterodimer of two subunits.

The catalysed reaction is N(6)-[(R)-lipoyl]-L-lysyl-[glycine-cleavage complex H protein] + glycine + H(+) = N(6)-[(R)-S(8)-aminomethyldihydrolipoyl]-L-lysyl-[glycine-cleavage complex H protein] + CO2. Functionally, the glycine cleavage system catalyzes the degradation of glycine. The P protein binds the alpha-amino group of glycine through its pyridoxal phosphate cofactor; CO(2) is released and the remaining methylamine moiety is then transferred to the lipoamide cofactor of the H protein. The chain is Probable glycine dehydrogenase (decarboxylating) subunit 1 from Thermomicrobium roseum (strain ATCC 27502 / DSM 5159 / P-2).